The chain runs to 138 residues: Basic phospholipase A2 chain HDP-2P (138 aa).

Residues 1 to 16 (MRILWIVAVCLIGVEG) form the signal peptide. 7 disulfides stabilise this stretch: Cys42–Cys131, Cys44–Cys60, Cys59–Cys111, Cys65–Cys138, Cys66–Cys104, Cys73–Cys97, and Cys91–Cys102. Residues Tyr43, Gly45, and Gly47 each contribute to the Ca(2+) site. Residue His63 is part of the active site. Asp64 contacts Ca(2+). Asp105 is an active-site residue.

In terms of assembly, heterodimer of an acidic and a basic chain; non-covalently linked. The toxic basic protein has phospholipase A2 activity (chain HDP-2P) and the non-toxic acidic protein functions as its inhibitor (chain HPD-1I (AC A4VBF0)). Requires Ca(2+) as cofactor. In terms of tissue distribution, expressed by the venom gland.

It is found in the secreted. The enzyme catalyses a 1,2-diacyl-sn-glycero-3-phosphocholine + H2O = a 1-acyl-sn-glycero-3-phosphocholine + a fatty acid + H(+). Its activity is regulated as follows. Enzymatic activity and neurotoxicity are inhibited by Triton X-100. Triton X-100 has been determined to be located in the center of the hydrophobic channel of the enzyme. Its function is as follows. Monomer: snake venom phospholipase A2 (PLA2) that affects neuromuscular transmission presynaptically. It has catalytic activity, anticoagulant activity and weakly inhibits ADP-induced platelet aggregation. PLA2 catalyzes the calcium-dependent hydrolysis of the 2-acyl groups in 3-sn-phosphoglycerides. Functionally, heterodimer: shows the same activities as the monomer, but with a lower potency. The sequence is that of Basic phospholipase A2 chain HDP-2P from Vipera nikolskii (Nikolsky's adder).